A 579-amino-acid polypeptide reads, in one-letter code: Type II restriction enzyme FokI (579 aa).

Residues D450, D467, and K469 contribute to the active site.

Monomer, in which form it can cleave DNA. Homodimer when bound to DNA. Mg(2+) is required as a cofactor.

It carries out the reaction Endonucleolytic cleavage of DNA to give specific double-stranded fragments with terminal 5'-phosphates.. In terms of biological role, an S subtype restriction enzyme that recognizes the asymmetric double-stranded sequence 5'-GGATG-3' and cleaves respectively 14 bases after G-1 (top strand) and 13 bases before C-1 (bottom strand). The protein is Type II restriction enzyme FokI of Planomicrobium okeanokoites (Planococcus okeanokoites).